Here is a 165-residue protein sequence, read N- to C-terminus: uncharacterized protein (165 aa).

Residues 49-165 (QLKPQGPKRP…VAQQREIAQK (117 aa)) form a disordered region. A compositionally biased stretch (polar residues) spans 94–106 (MNNNNNYKISYTS). Residues 120–135 (TLQRTTPQAQPTPQQP) are compositionally biased toward low complexity. Residues 139 to 157 (SRSSGGITGAVNNRPQMVA) are compositionally biased toward polar residues.

This is an uncharacterized protein from Caenorhabditis elegans.